Here is a 406-residue protein sequence, read N- to C-terminus: Tyrosine--tRNA ligase (406 aa).

Tyr-39 is a binding site for L-tyrosine. The 'HIGH' region signature appears at 44-53; it reads PTADSLHVGH. L-tyrosine is bound by residues Tyr-172 and Gln-176. The 'KMSKS' region signature appears at 232-236; that stretch reads KMGKT. Residue Lys-235 coordinates ATP. Positions 344 to 404 constitute an S4 RNA-binding domain; that stretch reads KELLDVLVDR…LGKKKFYNIV (61 aa).

Belongs to the class-I aminoacyl-tRNA synthetase family. TyrS type 1 subfamily. In terms of assembly, homodimer.

It localises to the cytoplasm. The enzyme catalyses tRNA(Tyr) + L-tyrosine + ATP = L-tyrosyl-tRNA(Tyr) + AMP + diphosphate + H(+). Catalyzes the attachment of tyrosine to tRNA(Tyr) in a two-step reaction: tyrosine is first activated by ATP to form Tyr-AMP and then transferred to the acceptor end of tRNA(Tyr). The protein is Tyrosine--tRNA ligase of Fusobacterium nucleatum subsp. nucleatum (strain ATCC 25586 / DSM 15643 / BCRC 10681 / CIP 101130 / JCM 8532 / KCTC 2640 / LMG 13131 / VPI 4355).